The chain runs to 748 residues: Catalase-peroxidase (748 aa).

A cross-link (tryptophyl-tyrosyl-methioninium (Trp-Tyr) (with M-264)) is located at residues Trp92 to Tyr238. The active-site Proton acceptor is His93. Residues Tyr238–Met264 constitute a cross-link (tryptophyl-tyrosyl-methioninium (Tyr-Met) (with W-92)). His279 contributes to the heme b binding site.

The protein belongs to the peroxidase family. Peroxidase/catalase subfamily. Homodimer or homotetramer. Requires heme b as cofactor. Formation of the three residue Trp-Tyr-Met cross-link is important for the catalase, but not the peroxidase activity of the enzyme.

The catalysed reaction is H2O2 + AH2 = A + 2 H2O. The enzyme catalyses 2 H2O2 = O2 + 2 H2O. In terms of biological role, bifunctional enzyme with both catalase and broad-spectrum peroxidase activity. This is Catalase-peroxidase from Xanthomonas axonopodis pv. citri (strain 306).